Reading from the N-terminus, the 334-residue chain is MKKIRKLTEADVTAESAFFMQRRQVLKALGISAAALSLPNAAHADLLSWFKGNDRPPAPAGKPLEFSKPTAWQNNLPLTPEDKVSGYNNFYEFGLDKADPAANAGSLKTDPWTLKISGEVAKPLTLDHDALTRRFPLEERIYRMRCVEAWSMVVPWIGFPLNKLLALAEPTSNAKYVAFETIYAPEQMPGQQDRFIGGGLKYPYVEGLRLDEAMHPLTLLTVGVYGKALPPQNGAPVRLIVPWKYGFKGIKSIVSIKLTRERPPTTWNLAAPDEYGFYANVNPHVDHPRWSQATERFIGAGGILDVQRQPTLLFNGYADQVASLYRGLDLRENF.

A signal peptide (tat-type signal) is located at residues 1–44 (MKKIRKLTEADVTAESAFFMQRRQVLKALGISAAALSLPNAAHA). Residues N88, 91–92 (YE), C146, T181, N233, R238, and 249–251 (GIK) each bind Mo-molybdopterin.

The protein belongs to the MsrP family. In terms of assembly, heterodimer of a catalytic subunit (MsrP) and a heme-binding subunit (MsrQ). Mo-molybdopterin serves as cofactor. Post-translationally, predicted to be exported by the Tat system. The position of the signal peptide cleavage has not been experimentally proven.

Its subcellular location is the periplasm. The enzyme catalyses L-methionyl-[protein] + a quinone + H2O = L-methionyl-(S)-S-oxide-[protein] + a quinol. It catalyses the reaction L-methionyl-[protein] + a quinone + H2O = L-methionyl-(R)-S-oxide-[protein] + a quinol. Part of the MsrPQ system that repairs oxidized periplasmic proteins containing methionine sulfoxide residues (Met-O), using respiratory chain electrons. Thus protects these proteins from oxidative-stress damage caused by reactive species of oxygen and chlorine generated by the host defense mechanisms. MsrPQ is essential for the maintenance of envelope integrity under bleach stress, rescuing a wide series of structurally unrelated periplasmic proteins from methionine oxidation, including the primary periplasmic chaperone SurA and the lipoprotein Pal. The catalytic subunit MsrP is non-stereospecific, being able to reduce both (R-) and (S-) diastereoisomers of methionine sulfoxide. The protein is Protein-methionine-sulfoxide reductase catalytic subunit MsrP of Escherichia fergusonii (strain ATCC 35469 / DSM 13698 / CCUG 18766 / IAM 14443 / JCM 21226 / LMG 7866 / NBRC 102419 / NCTC 12128 / CDC 0568-73).